The primary structure comprises 339 residues: DNA-directed RNA polymerase subunit alpha (339 aa).

The tract at residues 1 to 233 (MVREEVAGST…DLFLPFLHAE (233 aa)) is alpha N-terminal domain (alpha-NTD). The segment at 264–339 (KKGIPLNCIF…IDLLKNKLSF (76 aa)) is alpha C-terminal domain (alpha-CTD).

It belongs to the RNA polymerase alpha chain family. As to quaternary structure, in plastids the minimal PEP RNA polymerase catalytic core is composed of four subunits: alpha, beta, beta', and beta''. When a (nuclear-encoded) sigma factor is associated with the core the holoenzyme is formed, which can initiate transcription.

The protein resides in the plastid. It is found in the chloroplast. The catalysed reaction is RNA(n) + a ribonucleoside 5'-triphosphate = RNA(n+1) + diphosphate. Functionally, DNA-dependent RNA polymerase catalyzes the transcription of DNA into RNA using the four ribonucleoside triphosphates as substrates. This chain is DNA-directed RNA polymerase subunit alpha, found in Psathyrostachys fragilis (Russian wild rye).